The primary structure comprises 392 residues: tRNA (guanine-N(7)-)-methyltransferase (392 aa).

Positions 123, 148, and 175 each coordinate S-adenosyl-L-methionine. Residues K201 and D231 each contribute to the substrate site.

The protein belongs to the class I-like SAM-binding methyltransferase superfamily. TrmB family.

It catalyses the reaction guanosine(46) in tRNA + S-adenosyl-L-methionine = N(7)-methylguanosine(46) in tRNA + S-adenosyl-L-homocysteine. The protein operates within tRNA modification; N(7)-methylguanine-tRNA biosynthesis. Its function is as follows. Catalyzes the formation of N(7)-methylguanine at position 46 (m7G46) in tRNA. The sequence is that of tRNA (guanine-N(7)-)-methyltransferase from Campylobacter jejuni subsp. jejuni serotype O:6 (strain 81116 / NCTC 11828).